The sequence spans 264 residues: Acyl-[acyl-carrier-protein]--UDP-N-acetylglucosamine O-acyltransferase (264 aa).

Belongs to the transferase hexapeptide repeat family. LpxA subfamily. As to quaternary structure, homotrimer.

It localises to the cytoplasm. The enzyme catalyses a (3R)-hydroxyacyl-[ACP] + UDP-N-acetyl-alpha-D-glucosamine = a UDP-3-O-[(3R)-3-hydroxyacyl]-N-acetyl-alpha-D-glucosamine + holo-[ACP]. Its pathway is glycolipid biosynthesis; lipid IV(A) biosynthesis; lipid IV(A) from (3R)-3-hydroxytetradecanoyl-[acyl-carrier-protein] and UDP-N-acetyl-alpha-D-glucosamine: step 1/6. Its function is as follows. Involved in the biosynthesis of lipid A, a phosphorylated glycolipid that anchors the lipopolysaccharide to the outer membrane of the cell. This chain is Acyl-[acyl-carrier-protein]--UDP-N-acetylglucosamine O-acyltransferase, found in Rickettsia felis (strain ATCC VR-1525 / URRWXCal2) (Rickettsia azadi).